A 365-amino-acid chain; its full sequence is tRNA (guanine(6)-N2)-methyltransferase (365 aa).

The region spanning asparagine 69–threonine 182 is the THUMP domain. S-adenosyl-L-methionine-binding positions include histidine 198–leucine 202, serine 228–threonine 230, glutamate 248, aspartate 276–alanine 277, and asparagine 293.

Belongs to the methyltransferase superfamily. In terms of assembly, monomer in solution.

The protein resides in the cytoplasm. The catalysed reaction is guanosine(6) in tRNA + S-adenosyl-L-methionine = N(2)-methylguanosine(6) in tRNA + S-adenosyl-L-homocysteine + H(+). Functionally, S-adenosyl-L-methionine-dependent methyltransferase that catalyzes the methylation of the guanosine nucleotide at position 6 (m2G6) in tRNA(Phe). This is tRNA (guanine(6)-N2)-methyltransferase from Pyrococcus furiosus (strain ATCC 43587 / DSM 3638 / JCM 8422 / Vc1).